The primary structure comprises 122 residues: Large ribosomal subunit protein uL14 (122 aa).

Belongs to the universal ribosomal protein uL14 family. As to quaternary structure, part of the 50S ribosomal subunit. Forms a cluster with proteins L3 and L19. In the 70S ribosome, L14 and L19 interact and together make contacts with the 16S rRNA in bridges B5 and B8.

Functionally, binds to 23S rRNA. Forms part of two intersubunit bridges in the 70S ribosome. The polypeptide is Large ribosomal subunit protein uL14 (Maridesulfovibrio salexigens (strain ATCC 14822 / DSM 2638 / NCIMB 8403 / VKM B-1763) (Desulfovibrio salexigens)).